Here is a 177-residue protein sequence, read N- to C-terminus: MSRVAKAPVNIPAGVQVSLNGQLLTVKGKNSELSRTIHNSVEVKEDNGALTFAPREGFAGADAQAGTARALVNAMVIGVTEGFTKKLQLVGVGYRAQVKGNSISLNLGFSHPVEHTLPAGITAECPSQTEIVLKGADKQLIGQVAADIRAYRKPEPYKGKGVRYADEVVRTKEAKKK.

The protein belongs to the universal ribosomal protein uL6 family. As to quaternary structure, part of the 50S ribosomal subunit.

Its function is as follows. This protein binds to the 23S rRNA, and is important in its secondary structure. It is located near the subunit interface in the base of the L7/L12 stalk, and near the tRNA binding site of the peptidyltransferase center. The polypeptide is Large ribosomal subunit protein uL6 (Actinobacillus succinogenes (strain ATCC 55618 / DSM 22257 / CCUG 43843 / 130Z)).